The chain runs to 320 residues: Protein EI24 homolog (320 aa).

The next 3 helical transmembrane spans lie at 41-61 (QCFL…KWFI), 94-114 (GLLQ…SFIL), and 175-195 (ILLL…PYIG). A glycan (N-linked (GlcNAc...) asparagine) is linked at Asn217. The next 3 membrane-spanning stretches (helical) occupy residues 227–247 (LDFF…CVLA), 248–268 (IFFL…PLFV), and 292–312 (LGKL…LSIF).

It belongs to the EI24 (TC 9.B.7) family.

It is found in the membrane. The protein is Protein EI24 homolog of Arabidopsis thaliana (Mouse-ear cress).